The sequence spans 434 residues: GTPase Obg (434 aa).

The 159-residue stretch at 2 to 160 (PTFVDQTKIE…RVLRLELKLL (159 aa)) folds into the Obg domain. Residues 161-334 (ADVGLVGFPS…LMNDTATLVE (174 aa)) enclose the OBG-type G domain. Residues 167-174 (GFPSVGKS), 192-196 (FTTLT), 214-217 (DLPG), 284-287 (SQMD), and 315-317 (SSV) each bind GTP. Positions 174 and 194 each coordinate Mg(2+). One can recognise an OCT domain in the interval 356–434 (YKAPQKNEFT…IGKFVFEFVQ (79 aa)).

Belongs to the TRAFAC class OBG-HflX-like GTPase superfamily. OBG GTPase family. Monomer. It depends on Mg(2+) as a cofactor.

The protein localises to the cytoplasm. Its function is as follows. An essential GTPase which binds GTP, GDP and possibly (p)ppGpp with moderate affinity, with high nucleotide exchange rates and a fairly low GTP hydrolysis rate. Plays a role in control of the cell cycle, stress response, ribosome biogenesis and in those bacteria that undergo differentiation, in morphogenesis control. The protein is GTPase Obg of Lactobacillus helveticus (strain DPC 4571).